Here is a 316-residue protein sequence, read N- to C-terminus: Fe-S cluster assembly protein DRE2 (316 aa).

Positions 7 to 139 (VSPPKRTLLL…PDYGDNEGAV (133 aa)) are N-terminal SAM-like domain. Positions 140 to 208 (TLKFGLKKKN…EDTLMTEEDL (69 aa)) are linker. Cys218, Cys229, Cys232, and Cys234 together coordinate [2Fe-2S] cluster. Residues 218 to 234 (CQPKAGKRRRACKDCSC) form a fe-S binding site A region. [4Fe-4S] cluster is bound by residues Cys279, Cys282, Cys290, and Cys293. 2 short sequence motifs (cx2C motif) span residues 279-282 (CGNC) and 290-293 (CDGC). The fe-S binding site B stretch occupies residues 279–293 (CGNCSLGDAFRCDGC).

This sequence belongs to the anamorsin family. As to quaternary structure, monomer. Interacts with TAH18. Interacts with MIA40. [2Fe-2S] cluster is required as a cofactor. The cofactor is [4Fe-4S] cluster.

The protein resides in the cytoplasm. It localises to the mitochondrion intermembrane space. In terms of biological role, component of the cytosolic iron-sulfur (Fe-S) protein assembly (CIA) machinery required for the maturation of extramitochondrial Fe-S proteins. Part of an electron transfer chain functioning in an early step of cytosolic Fe-S biogenesis, facilitating the de novo assembly of a [4Fe-4S] cluster on the scaffold complex CFD1-NBP35. Electrons are transferred to DRE2 from NADPH via the FAD- and FMN-containing protein TAH18. TAH18-DRE2 are also required for the assembly of the diferric tyrosyl radical cofactor of ribonucleotide reductase (RNR), probably by providing electrons for reduction during radical cofactor maturation in the catalytic small subunit RNR2. The sequence is that of Fe-S cluster assembly protein DRE2 from Fusarium vanettenii (strain ATCC MYA-4622 / CBS 123669 / FGSC 9596 / NRRL 45880 / 77-13-4) (Fusarium solani subsp. pisi).